The chain runs to 1723 residues: Probable outer membrane protein pmp20 (1723 aa).

Residues 1–21 (MKWLPATAVFAAVLPALTAFG) form the signal peptide. Disordered regions lie at residues 78–100 (VTPD…SGAT) and 139–161 (LSSS…SASA). Low complexity-rich tracts occupy residues 85–100 (SSSN…SGAT) and 140–161 (SSSS…SASA). One can recognise an Autotransporter domain in the interval 1434–1723 (EDPAFNNFWA…MANGGIRFVF (290 aa)).

Belongs to the PMP outer membrane protein family.

Its subcellular location is the secreted. The protein resides in the cell wall. It is found in the cell outer membrane. This Chlamydia pneumoniae (Chlamydophila pneumoniae) protein is Probable outer membrane protein pmp20 (pmp20).